A 772-amino-acid polypeptide reads, in one-letter code: MAEAHQAVAFQFTVTPDGVDFRLSREALKHVYLSGINSWKKRLIRIKNGILRGVYPGSPTSWLVVIMATVGSSFCNVDISLGLVSCIQRCLPQGCGPYQTPQTRALLSMAIFSTGVWVTGIFFFRQTLKLLLCYHGWMFEMHGKTSNLTRIWAMCIRLLSSRHPMLYSFQTSLPKLPVPRVSATIQRYLESVRPLLDDEEYYRMELLAKEFQDKTAPRLQKYLVLKSWWASNYVSDWWEEYIYLRGRSPLMVNSNYYVMDLVLIKNTDVQAARLGNIIHAMIMYRRKLDREEIKPVMALGIVPMCSYQMERMFNTTRIPGKDTDVLQHLSDSRHVAVYHKGRFFKLWLYEGARLLKPQDLEMQFQRILDDPSPPQPGEEKLAALTAGGRVEWAQARQAFFSSGKNKAALEAIERAAFFVALDEESYSYDPEDEASLSLYGKALLHGNCYNRWFDKSFTLISFKNGQLGLNAEHAWADAPIIGHLWEFVLGTDSFHLGYTETGHCLGKPNPALAPPTRLQWDIPKQCQAVIESSYQVAKALADDVELYCFQFLPFGKGLIKKCRTSPDAFVQIALQLAHFRDRGKFCLTYEASMTRMFREGRTETVRSCTSESTAFVQAMMEGSHTKADLRDLFQKAAKKHQNMYRLAMTGAGIDRHLFCLYLVSKYLGVSSPFLAEVLSEPWRLSTSQIPQSQIRMFDPEQHPNHLGAGGGFGPVADDGYGVSYMIAGENTIFFHISSKFSSSETNAQRFGNHIRKALLDIADLFQVPKAYS.

At 1-47 (MAEAHQAVAFQFTVTPDGVDFRLSREALKHVYLSGINSWKKRLIRIK) the chain is on the cytoplasmic side. The chain crosses the membrane as a helical span at residues 48–73 (NGILRGVYPGSPTSWLVVIMATVGSS). The Mitochondrial intermembrane segment spans residues 74-102 (FCNVDISLGLVSCIQRCLPQGCGPYQTPQ). The chain crosses the membrane as a helical span at residues 103 to 122 (TRALLSMAIFSTGVWVTGIF). The Cytoplasmic segment spans residues 123–772 (FFRQTLKLLL…DLFQVPKAYS (650 aa)). The active-site Proton acceptor is histidine 473. Residue 555 to 567 (GKGLIKKCRTSPD) coordinates CoA. The (R)-carnitine site is built by tyrosine 589 and threonine 602.

It belongs to the carnitine/choline acetyltransferase family. As to expression, strong expression in heart and skeletal muscle. No expression in liver and kidney.

It is found in the mitochondrion outer membrane. The enzyme catalyses (R)-carnitine + hexadecanoyl-CoA = O-hexadecanoyl-(R)-carnitine + CoA. It functions in the pathway lipid metabolism; fatty acid beta-oxidation. Catalyzes the transfer of the acyl group of long-chain fatty acid-CoA conjugates onto carnitine, an essential step for the mitochondrial uptake of long-chain fatty acids and their subsequent beta-oxidation in the mitochondrion. The protein is Carnitine O-palmitoyltransferase 1, muscle isoform (CPT1B) of Homo sapiens (Human).